We begin with the raw amino-acid sequence, 100 residues long: Aspartyl/glutamyl-tRNA(Asn/Gln) amidotransferase subunit C (100 aa).

This sequence belongs to the GatC family. In terms of assembly, heterotrimer of A, B and C subunits.

It carries out the reaction L-glutamyl-tRNA(Gln) + L-glutamine + ATP + H2O = L-glutaminyl-tRNA(Gln) + L-glutamate + ADP + phosphate + H(+). The enzyme catalyses L-aspartyl-tRNA(Asn) + L-glutamine + ATP + H2O = L-asparaginyl-tRNA(Asn) + L-glutamate + ADP + phosphate + 2 H(+). In terms of biological role, allows the formation of correctly charged Asn-tRNA(Asn) or Gln-tRNA(Gln) through the transamidation of misacylated Asp-tRNA(Asn) or Glu-tRNA(Gln) in organisms which lack either or both of asparaginyl-tRNA or glutaminyl-tRNA synthetases. The reaction takes place in the presence of glutamine and ATP through an activated phospho-Asp-tRNA(Asn) or phospho-Glu-tRNA(Gln). The chain is Aspartyl/glutamyl-tRNA(Asn/Gln) amidotransferase subunit C from Streptococcus mutans serotype c (strain ATCC 700610 / UA159).